Consider the following 509-residue polypeptide: ATP synthase subunit alpha (509 aa).

169 to 176 lines the ATP pocket; sequence GDRQTGKT.

Belongs to the ATPase alpha/beta chains family. As to quaternary structure, F-type ATPases have 2 components, CF(1) - the catalytic core - and CF(0) - the membrane proton channel. CF(1) has five subunits: alpha(3), beta(3), gamma(1), delta(1), epsilon(1). CF(0) has four main subunits: a(1), b(1), b'(1) and c(9-12).

The protein resides in the cell inner membrane. The catalysed reaction is ATP + H2O + 4 H(+)(in) = ADP + phosphate + 5 H(+)(out). Its function is as follows. Produces ATP from ADP in the presence of a proton gradient across the membrane. The alpha chain is a regulatory subunit. This chain is ATP synthase subunit alpha, found in Bradyrhizobium sp. (strain ORS 278).